Reading from the N-terminus, the 276-residue chain is Probable endonuclease 4 (276 aa).

The Zn(2+) site is built by His65, His105, Glu141, Asp175, His178, His210, Asp223, His225, and Glu255.

Belongs to the AP endonuclease 2 family. Zn(2+) is required as a cofactor.

The enzyme catalyses Endonucleolytic cleavage to 5'-phosphooligonucleotide end-products.. In terms of biological role, endonuclease IV plays a role in DNA repair. It cleaves phosphodiester bonds at apurinic or apyrimidinic (AP) sites, generating a 3'-hydroxyl group and a 5'-terminal sugar phosphate. The polypeptide is Probable endonuclease 4 (Symbiobacterium thermophilum (strain DSM 24528 / JCM 14929 / IAM 14863 / T)).